Here is a 293-residue protein sequence, read N- to C-terminus: NAD kinase (293 aa).

The active-site Proton acceptor is the Asp-74. Residues 74-75 (DG), 148-149 (NE), His-159, Arg-176, Asp-178, Thr-186, 189-194 (TAYSLS), and Gln-248 each bind NAD(+).

The protein belongs to the NAD kinase family. Homodimer. A divalent metal cation is required as a cofactor.

The protein resides in the cytoplasm. The enzyme catalyses NAD(+) + ATP = ADP + NADP(+) + H(+). In terms of biological role, involved in the regulation of the intracellular balance of NAD and NADP, and is a key enzyme in the biosynthesis of NADP. Catalyzes specifically the phosphorylation on 2'-hydroxyl of the adenosine moiety of NAD to yield NADP. The sequence is that of NAD kinase from Yersinia pestis.